The sequence spans 272 residues: Polar tube protein 2 (272 aa).

The N-terminal stretch at 1 to 21 (MLLLFTVVTLVSAAQVAPVTP) is a signal peptide. Asn-134 carries N-linked (GlcNAc...) asparagine glycosylation. Residues 231-272 (RAIQKKEVKESSKDGEKSSTQNGEGTTDDEDGQQSPDGNGPE) form a disordered region. Over residues 234–247 (QKKEVKESSKDGEK) the composition is skewed to basic and acidic residues. The segment covering 263–272 (QQSPDGNGPE) has biased composition (polar residues).

The protein resides in the spore polar tube. Involved in formation of a polar tube through which the infectious agent is passed on to the host cell. The chain is Polar tube protein 2 (PTP2) from Encephalitozoon hellem (Microsporidian parasite).